Consider the following 319-residue polypeptide: Ribose-phosphate pyrophosphokinase (319 aa).

ATP-binding positions include 40–42 and 99–100; these read DGE and RQ. Residues His134 and Asp174 each coordinate Mg(2+). The active site involves Lys198. Residues Arg200, Asp224, and 228–232 contribute to the D-ribose 5-phosphate site; that span reads DTAGT.

This sequence belongs to the ribose-phosphate pyrophosphokinase family. Class I subfamily. In terms of assembly, homohexamer. Mg(2+) is required as a cofactor.

The protein localises to the cytoplasm. The enzyme catalyses D-ribose 5-phosphate + ATP = 5-phospho-alpha-D-ribose 1-diphosphate + AMP + H(+). Its pathway is metabolic intermediate biosynthesis; 5-phospho-alpha-D-ribose 1-diphosphate biosynthesis; 5-phospho-alpha-D-ribose 1-diphosphate from D-ribose 5-phosphate (route I): step 1/1. Functionally, involved in the biosynthesis of the central metabolite phospho-alpha-D-ribosyl-1-pyrophosphate (PRPP) via the transfer of pyrophosphoryl group from ATP to 1-hydroxyl of ribose-5-phosphate (Rib-5-P). This is Ribose-phosphate pyrophosphokinase from Xanthomonas campestris pv. campestris (strain ATCC 33913 / DSM 3586 / NCPPB 528 / LMG 568 / P 25).